The chain runs to 306 residues: D-alanine--D-alanine ligase (306 aa).

The ATP-grasp domain maps to 105–300 (KMIWQAAGIS…FDELVIQILE (196 aa)). 131–186 (TDRLGLPLIIKPAREGSTIGLNKVDYAQDMQSAYQTAAQHDSLVIAEQFIQGIELT) is an ATP binding site. Residues Asp254, Glu267, and Asn269 each contribute to the Mg(2+) site.

The protein belongs to the D-alanine--D-alanine ligase family. It depends on Mg(2+) as a cofactor. Requires Mn(2+) as cofactor.

The protein resides in the cytoplasm. It carries out the reaction 2 D-alanine + ATP = D-alanyl-D-alanine + ADP + phosphate + H(+). Its pathway is cell wall biogenesis; peptidoglycan biosynthesis. Functionally, cell wall formation. This Nitrosomonas eutropha (strain DSM 101675 / C91 / Nm57) protein is D-alanine--D-alanine ligase.